The primary structure comprises 211 residues: Putative 3-methyladenine DNA glycosylase (211 aa).

The protein belongs to the DNA glycosylase MPG family.

In Granulibacter bethesdensis (strain ATCC BAA-1260 / CGDNIH1), this protein is Putative 3-methyladenine DNA glycosylase.